The chain runs to 190 residues: Potassium-transporting ATPase KdpC subunit (190 aa).

The helical transmembrane segment at 10–30 threads the bilayer; the sequence is TFLFLLLITGGVYPLLTTALG.

The protein belongs to the KdpC family. The system is composed of three essential subunits: KdpA, KdpB and KdpC.

Its subcellular location is the cell inner membrane. In terms of biological role, part of the high-affinity ATP-driven potassium transport (or Kdp) system, which catalyzes the hydrolysis of ATP coupled with the electrogenic transport of potassium into the cytoplasm. This subunit acts as a catalytic chaperone that increases the ATP-binding affinity of the ATP-hydrolyzing subunit KdpB by the formation of a transient KdpB/KdpC/ATP ternary complex. The chain is Potassium-transporting ATPase KdpC subunit from Escherichia coli O6:H1 (strain CFT073 / ATCC 700928 / UPEC).